The sequence spans 218 residues: Small ribosomal subunit protein uS5 (218 aa).

The segment covering 1 to 10 (MTQATNQTPG) has biased composition (polar residues). Residues 1–63 (MTQATNQTPG…GRDERDSEWQ (63 aa)) form a disordered region. A compositionally biased stretch (low complexity) spans 11-25 (QDVPGAADVPAAAEG). The segment covering 31-63 (GERRGGGGGRGGDRRGRGDRRGRGRDERDSEWQ) has biased composition (basic and acidic residues). Residues 62 to 125 (WQERVIQIRR…ADGKKHLVKV (64 aa)) form the S5 DRBM domain.

Belongs to the universal ribosomal protein uS5 family. In terms of assembly, part of the 30S ribosomal subunit. Contacts proteins S4 and S8.

Its function is as follows. With S4 and S12 plays an important role in translational accuracy. In terms of biological role, located at the back of the 30S subunit body where it stabilizes the conformation of the head with respect to the body. The sequence is that of Small ribosomal subunit protein uS5 from Synechococcus sp. (strain RCC307).